We begin with the raw amino-acid sequence, 553 residues long: Methionine--tRNA ligase (553 aa).

The 'HIGH' region motif lies at 12-22; sequence PYANSQLHLGH. 4 residues coordinate Zn(2+): Cys144, Cys147, Cys157, and Cys160. Positions 332–336 match the 'KMSKS' region motif; the sequence is KFSKS. An ATP-binding site is contributed by Lys335.

This sequence belongs to the class-I aminoacyl-tRNA synthetase family. MetG type 1 subfamily. In terms of assembly, monomer. It depends on Zn(2+) as a cofactor.

The protein resides in the cytoplasm. It carries out the reaction tRNA(Met) + L-methionine + ATP = L-methionyl-tRNA(Met) + AMP + diphosphate. Is required not only for elongation of protein synthesis but also for the initiation of all mRNA translation through initiator tRNA(fMet) aminoacylation. This Dehalococcoides mccartyi (strain ATCC BAA-2266 / KCTC 15142 / 195) (Dehalococcoides ethenogenes (strain 195)) protein is Methionine--tRNA ligase.